We begin with the raw amino-acid sequence, 674 residues long: Endopolyphosphatase (674 aa).

Over 1–21 (MVVVGKSEVRNVSMSRPKKKS) the chain is Cytoplasmic. 2 consecutive propeptides (removed in mature form) follow at residues 1-83 (MVVV…VIIK) and 385-674 (EQST…YKDD). Residue lysine 6 forms a Glycyl lysine isopeptide (Lys-Gly) (interchain with G-Cter in ubiquitin) linkage. A helical; Signal-anchor for type II membrane protein transmembrane segment spans residues 22–42 (LIAILSTCVLFFLVFIIGAKF). At 43–674 (QYVSVFSKFL…SFASSGYKDD (632 aa)) the chain is on the vacuolar side. N-linked (GlcNAc...) asparagine glycosylation is present at asparagine 58. The interval 384–403 (MEQSTRVQQGEDSNEEDEET) is disordered. N-linked (GlcNAc...) asparagine glycans are attached at residues asparagine 505 and asparagine 511.

The protein belongs to the endopolyphosphatase PPN1 family. In terms of assembly, homotetramer. Interacts with PPN2. Requires Mn(2+) as cofactor. The cofactor is Mg(2+). Co(2+) serves as cofactor. It depends on Zn(2+) as a cofactor. Post-translationally, processing by proteases in the vacuole is required for activation. In terms of processing, ubiquitinated. Ubiquitination mediates sorting into internal vesicles in late endosomes. TUL1 and RSP5 are required for ubiquitination. Other cytoplasmic Lys residues than Lys-6 may also be ubiquitinated. N-glycosylated. N-glycosylation is essential for the protease-mediated maturation.

Its subcellular location is the vacuole membrane. The protein localises to the cytoplasm. It catalyses the reaction [phosphate](n+1) + n H2O = (n+1) phosphate + n H(+). The catalysed reaction is [phosphate](n) + H2O = [phosphate](n-1) + phosphate + H(+). The enzyme catalyses dATP + H2O = dADP + phosphate + H(+). Inhibited by heparin and EDTA. Catalyzes the hydrolysis of inorganic polyphosphate (polyP) chains of many hundreds of phosphate residues into shorter lengths. Has both exopolyphosphatase and endopolyphosphatase activities at different ratios depending on divalent cations by cleaving phosphate from the chain end and by fragmenting long-chain polymers into shorter ones, respectively. The limited digestion products are 1 and 3 P(i) residues. Also releases phosphate from dATP. dATP phosphohydrolase activity is about 7-fold lower than the exopolyphosphatase activity. This is Endopolyphosphatase from Saccharomyces cerevisiae (strain ATCC 204508 / S288c) (Baker's yeast).